We begin with the raw amino-acid sequence, 196 residues long: Phosphoheptose isomerase (196 aa).

The 160-residue stretch at 34-193 (LIETFKIGNK…EQGLFGIFAG (160 aa)) folds into the SIS domain. Residue 49–51 (NGG) participates in substrate binding. Zn(2+) contacts are provided by His-58 and Glu-62. Residues Glu-62, 91–92 (ND), 117–119 (STS), Ser-122, and Gln-169 contribute to the substrate site. Positions 169 and 177 each coordinate Zn(2+).

Belongs to the SIS family. GmhA subfamily. In terms of assembly, homotetramer. Requires Zn(2+) as cofactor.

The protein localises to the cytoplasm. The enzyme catalyses 2 D-sedoheptulose 7-phosphate = D-glycero-alpha-D-manno-heptose 7-phosphate + D-glycero-beta-D-manno-heptose 7-phosphate. Its pathway is carbohydrate biosynthesis; D-glycero-D-manno-heptose 7-phosphate biosynthesis; D-glycero-alpha-D-manno-heptose 7-phosphate and D-glycero-beta-D-manno-heptose 7-phosphate from sedoheptulose 7-phosphate: step 1/1. Its function is as follows. Catalyzes the isomerization of sedoheptulose 7-phosphate in D-glycero-D-manno-heptose 7-phosphate. This chain is Phosphoheptose isomerase, found in Trichlorobacter lovleyi (strain ATCC BAA-1151 / DSM 17278 / SZ) (Geobacter lovleyi).